The sequence spans 359 residues: GTP 3',8-cyclase (359 aa).

The 228-residue stretch at 33–260 folds into the Radical SAM core domain; the sequence is RFGRRHDSLR…PTGRENPSAP (228 aa). Residue R42 coordinates GTP. Positions 49 and 53 each coordinate [4Fe-4S] cluster. Y55 serves as a coordination point for S-adenosyl-L-methionine. Position 56 (C56) interacts with [4Fe-4S] cluster. R93 is a binding site for GTP. G97 provides a ligand contact to S-adenosyl-L-methionine. GTP is bound at residue T124. S148 provides a ligand contact to S-adenosyl-L-methionine. Position 185 (K185) interacts with GTP. M219 contacts S-adenosyl-L-methionine. Residues C286 and C289 each contribute to the [4Fe-4S] cluster site. GTP is bound at residue 291–293; that stretch reads RLR. Residue C303 participates in [4Fe-4S] cluster binding.

It belongs to the radical SAM superfamily. MoaA family. As to quaternary structure, monomer and homodimer. The cofactor is [4Fe-4S] cluster.

The enzyme catalyses GTP + AH2 + S-adenosyl-L-methionine = (8S)-3',8-cyclo-7,8-dihydroguanosine 5'-triphosphate + 5'-deoxyadenosine + L-methionine + A + H(+). It participates in cofactor biosynthesis; molybdopterin biosynthesis. Its function is as follows. Catalyzes the cyclization of GTP to (8S)-3',8-cyclo-7,8-dihydroguanosine 5'-triphosphate. The chain is GTP 3',8-cyclase from Rhodopirellula baltica (strain DSM 10527 / NCIMB 13988 / SH1).